A 97-amino-acid chain; its full sequence is Theromacin (97 aa).

The first 22 residues, 1–22, serve as a signal peptide directing secretion; it reads MELKSGLSILLCFGICIAVINA. Intrachain disulfides connect Cys-24–Cys-31, Cys-46–Cys-50, Cys-53–Cys-95, Cys-61–Cys-69, and Cys-79–Cys-81.

As to expression, coelomic liquid (at protein level). Expressed in large fat cells in contact with coelomic cavities, in intestinal epithelia and at the epidermis level.

It is found in the secreted. Its function is as follows. Has a bactericidal activity. Active against M.luteus. No activity toward E.coli and F.oxysporum. This chain is Theromacin, found in Theromyzon tessulatum (Duck leech).